The primary structure comprises 567 residues: Hexose transporter HXT9 (567 aa).

Over residues 1 to 16 the composition is skewed to polar residues; that stretch reads MSGVNNTSANDLSTTE. The interval 1–45 is disordered; it reads MSGVNNTSANDLSTTESNSNSVANAPSVKTEHNDSKNSLNLDATE. Residues 1 to 56 lie on the Cytoplasmic side of the membrane; it reads MSGVNNTSANDLSTTESNSNSVANAPSVKTEHNDSKNSLNLDATEPPIDLPQKPLS. The span at 17–28 shows a compositional bias: low complexity; the sequence is SNSNSVANAPSV. A helical membrane pass occupies residues 57–77; it reads AYTTVAILCLMIAFGGFIFGW. At 78 to 112 the chain is on the extracellular side; the sequence is DTGTISGFVNLSDFIRRFGQKNDKGTYYLSKVRMG. The N-linked (GlcNAc...) asparagine glycan is linked to Asn-87. The chain crosses the membrane as a helical span at residues 113 to 133; that stretch reads LIVSIFNIGCAIGGIVLSKVG. Residues 134–139 are Cytoplasmic-facing; the sequence is DIYGRR. A helical transmembrane segment spans residues 140–160; sequence IGLITVTAIYVVGILIQITSI. The Extracellular segment spans residues 161-170; that stretch reads NKWYQYFIGR. The chain crosses the membrane as a helical span at residues 171-191; it reads IISGLGVGGIAVLSPMLISEV. Over 192-197 the chain is Cytoplasmic; sequence APKQIR. A helical transmembrane segment spans residues 198 to 218; that stretch reads GTLVQLYQLMCTMGIFLGYCT. The Extracellular segment spans residues 219 to 232; sequence NYGTKNYHNATQWR. Asn-227 carries an N-linked (GlcNAc...) asparagine glycan. The helical transmembrane segment at 233 to 253 threads the bilayer; it reads VGLGLCFAWTTFMVSGMMFVP. Residues 254-336 lie on the Cytoplasmic side of the membrane; it reads ESPRYLIEVG…IQSLQQLTGD (83 aa). Residues 337-353 traverse the membrane as a helical segment; sequence NYFFYYGTTIFKSVGLK. Over 354-359 the chain is Extracellular; sequence DSFQTS. Residues 360-377 traverse the membrane as a helical segment; sequence IIIGVVNFFSSFIAVYTI. At 378–384 the chain is on the cytoplasmic side; sequence ERFGRRT. The chain crosses the membrane as a helical span at residues 385-405; sequence CLLWGAASMLCCFAVFASVGV. At 406–429 the chain is on the extracellular side; the sequence is TKLWPQGSSHQDITSQGAGNCMIV. The helical transmembrane segment at 430–450 threads the bilayer; sequence FTMFFIFSFATTWAGGCYVIV. Over 451–467 the chain is Cytoplasmic; that stretch reads SETFPLRVKSRGMAIAT. The chain crosses the membrane as a helical span at residues 468-488; that stretch reads AANWMWGFLISFFTPFITGAI. Residue Asn-489 is a topological domain, extracellular. Residues 490 to 510 form a helical membrane-spanning segment; that stretch reads FYYGYVFLGCLVFAYFYVFFF. Residues 511-567 are Cytoplasmic-facing; the sequence is VPETKGLTLEEVNTMWLEGVPAWKSASWVPPERRTADYDADAIDHDDRPIYKRFFSS.

This sequence belongs to the major facilitator superfamily. Sugar transporter (TC 2.A.1.1) family.

The protein resides in the membrane. Probable glucose transporter. This is Hexose transporter HXT9 (HXT9) from Saccharomyces cerevisiae (strain ATCC 204508 / S288c) (Baker's yeast).